The primary structure comprises 345 residues: N-acetyl-gamma-glutamyl-phosphate reductase (345 aa).

Residue cysteine 149 is part of the active site.

This sequence belongs to the NAGSA dehydrogenase family. Type 1 subfamily.

It is found in the cytoplasm. The catalysed reaction is N-acetyl-L-glutamate 5-semialdehyde + phosphate + NADP(+) = N-acetyl-L-glutamyl 5-phosphate + NADPH + H(+). It participates in amino-acid biosynthesis; L-arginine biosynthesis; N(2)-acetyl-L-ornithine from L-glutamate: step 3/4. Catalyzes the NADPH-dependent reduction of N-acetyl-5-glutamyl phosphate to yield N-acetyl-L-glutamate 5-semialdehyde. The sequence is that of N-acetyl-gamma-glutamyl-phosphate reductase from Bacillus cereus (strain B4264).